Here is an 838-residue protein sequence, read N- to C-terminus: Glycogen phosphorylase, brain form (838 aa).

Ala-2 is modified (N-acetylalanine). Residue Ser-15 is modified to Phosphoserine. 3 residues coordinate AMP: Asp-43, Tyr-197, and Arg-310. Phosphotyrosine is present on Tyr-197. Phosphotyrosine is present on Tyr-473. Ser-524 is subject to Phosphoserine. Lys-569 provides a ligand contact to pyridoxal 5'-phosphate. The pyridoxal 5'-phosphate stretch occupies residues 677–678 (TG). Lys-681 bears the N6-(pyridoxal phosphate)lysine mark.

It belongs to the glycogen phosphorylase family. In terms of assembly, homodimer. Dimers associate into a tetramer to form the enzymatically active phosphorylase A. The cofactor is pyridoxal 5'-phosphate. Post-translationally, phosphorylation of Ser-15 converts phosphorylase B (unphosphorylated) to phosphorylase A.

It carries out the reaction [(1-&gt;4)-alpha-D-glucosyl](n) + phosphate = [(1-&gt;4)-alpha-D-glucosyl](n-1) + alpha-D-glucose 1-phosphate. With respect to regulation, activity of phosphorylase is controlled both by allosteric means (through the non-covalent binding of metabolites) and by covalent modification. Thus AMP allosterically activates, whereas ATP, ADP, and glucose-6-phosphate allosterically inhibit, phosphorylase B. Glycogen phosphorylase that regulates glycogen mobilization. Phosphorylase is an important allosteric enzyme in carbohydrate metabolism. Enzymes from different sources differ in their regulatory mechanisms and in their natural substrates. However, all known phosphorylases share catalytic and structural properties. The polypeptide is Glycogen phosphorylase, brain form (Pygb) (Rattus norvegicus (Rat)).